Here is a 482-residue protein sequence, read N- to C-terminus: Class E basic helix-loop-helix protein 41 (482 aa).

Lysine 31 is covalently cross-linked (Glycyl lysine isopeptide (Lys-Gly) (interchain with G-Cter in SUMO2)). Positions 44–99 (TYKLPHRLIEKKRRDRINECIAQLKDLLPEHLKLTTLGHLEKAVVLELTLKHLKAL) constitute a bHLH domain. Positions 67–71 (LKDLL) are necessary for interaction with RXRA and repressor activity towards RXRA. Lysine 121 participates in a covalent cross-link: Glycyl lysine isopeptide (Lys-Gly) (interchain with G-Cter in SUMO2). In terms of domain architecture, Orange spans 131–166 (FHSGFQTCAKEVLQYLSRFESWTPREPRCVQLINHL). Lysine 210 is covalently cross-linked (Glycyl lysine isopeptide (Lys-Gly) (interchain with G-Cter in SUMO2)). 2 disordered regions span residues 228 to 298 (AELA…GGAA) and 438 to 482 (VAPL…KEAP). The segment covering 246–256 (AEARPDREKGK) has biased composition (basic and acidic residues). Residue lysine 266 forms a Glycyl lysine isopeptide (Lys-Gly) (interchain with G-Cter in SUMO2) linkage. A compositionally biased stretch (gly residues) spans 285 to 297 (RGGGSGGGPGGGA).

As to quaternary structure, homodimer. Heterodimer with BHLHE40/DEC1. Interacts with CIART and BMAL1. Interacts with RXRA. Interacts with NR0B2 and HNF1A. Highly expressed in skeletal muscle and brain, moderately expressed in pancreas and heart, weakly expressed in placenta, lung, liver and kidney.

Its subcellular location is the nucleus. Transcriptional repressor involved in the regulation of the circadian rhythm by negatively regulating the activity of the clock genes and clock-controlled genes. Acts as the negative limb of a novel autoregulatory feedback loop (DEC loop) which differs from the one formed by the PER and CRY transcriptional repressors (PER/CRY loop). Both these loops are interlocked as it represses the expression of PER1 and in turn is repressed by PER1/2 and CRY1/2. Represses the activity of the circadian transcriptional activator: CLOCK-BMAL1 heterodimer by competing for the binding to E-box elements (5'-CACGTG-3') found within the promoters of its target genes. Negatively regulates its own expression and the expression of DBP and BHLHE41/DEC2. Acts as a corepressor of RXR and the RXR-LXR heterodimers and represses the ligand-induced RXRA/B/G, NR1H3/LXRA, NR1H4 and VDR transactivation activity. Inhibits HNF1A-mediated transactivation of CYP1A2, CYP2E1 AND CYP3A11. This chain is Class E basic helix-loop-helix protein 41, found in Homo sapiens (Human).